The following is a 65-amino-acid chain: Large ribosomal subunit protein bL33c (65 aa).

Belongs to the bacterial ribosomal protein bL33 family.

The protein resides in the plastid. It localises to the chloroplast. This is Large ribosomal subunit protein bL33c from Gracilaria tenuistipitata var. liui (Red alga).